Consider the following 342-residue polypeptide: Putative ABC transporter anion-binding protein HVO_1888 (342 aa).

The tat-type signal signal peptide spans 1–32 (MAIERRRFLQAAGVGAVLGLSGCTGNTSPPQA). Positions 24-37 (TGNTSPPQANNETA) are enriched in polar residues. Residues 24-52 (TGNTSPPQANNETAEGSGGSESGDGSTQE) form a disordered region.

The complex is composed of two ATP-binding proteins (HVO_1886), two transmembrane proteins (HVO_1887) and a solute-binding protein (HVO_1888). In terms of processing, predicted to be exported by the Tat system. The position of the signal peptide cleavage has not been experimentally proven.

Its function is as follows. Part of an ABC transporter complex involved in anions import. This chain is Putative ABC transporter anion-binding protein HVO_1888, found in Haloferax volcanii (strain ATCC 29605 / DSM 3757 / JCM 8879 / NBRC 14742 / NCIMB 2012 / VKM B-1768 / DS2) (Halobacterium volcanii).